The sequence spans 1516 residues: EF-hand calcium-binding domain-containing protein 6 (1516 aa).

Residues 1–23 (MKRNGTRLNFAKANSTKSGSTRA) form a disordered region. Residues 12 to 21 (KANSTKSGST) are compositionally biased toward polar residues. EF-hand domains are found at residues 96 to 131 (SRRD…FLIP), 197 to 232 (RNMR…FCLR), 321 to 356 (KSYE…FIYR), 444 to 462 (SGHI…MVAK), and 528 to 563 (RNLQ…FCPY). Ca(2+) is bound by residues D109, N111, N113, M115, D120, D210, N212, T214, and E221. The disordered stretch occupies residues 618–638 (EEPGQQDERTQPSGEKTSEIN). The span at 628–638 (QPSGEKTSEIN) shows a compositional bias: polar residues. 6 consecutive EF-hand domains span residues 674–690 (KINQ…SGMP), 763–798 (ESFR…LQLN), 905–940 (LTPR…RYSP), 1086–1121 (SSQP…VCQK), 1193–1228 (SHYH…HIQI), and 1229–1264 (LTDE…ERVP). Ca(2+)-binding residues include D776, D778, D780, and D787. The residue at position 906 (T906) is a Phosphothreonine. The disordered stretch occupies residues 1263 to 1318 (VPSPPMAAGDSGESTMAQRGSSAPEFSQGTRSNLYSPPRDSRVGLKSRSHPCTPVG). S1265 carries the post-translational modification Phosphoserine. The span at 1274–1297 (GESTMAQRGSSAPEFSQGTRSNLY) shows a compositional bias: polar residues. Position 1311 is a phosphoserine (S1311). Residues T1315 and T1319 each carry the phosphothreonine modification. The segment at 1318 to 1516 (GTPPLQNCEP…YNDFLRAFLQ (199 aa)) is interaction with PARK7. 4 consecutive EF-hand domains span residues 1348-1373 (KEKD…FKLD), 1374-1409 (ISRE…LLKA), 1454-1484 (MRRS…YSIN), and 1485-1516 (LSEE…AFLQ). Positions 1422 to 1516 (NADKMKEAGM…YNDFLRAFLQ (95 aa)) are interaction with AR. 4 residues coordinate Ca(2+): D1462, N1464, T1466, and D1473.

In terms of assembly, microtubule inner protein component of sperm flagellar doublet microtubules. Binds PARK7. Part of a ternary complex containing PARK7, EFCAB6/DJBP and AR.

Its subcellular location is the nucleus. The protein resides in the cytoplasm. The protein localises to the cytoskeleton. It localises to the flagellum axoneme. In terms of biological role, negatively regulates the androgen receptor by recruiting histone deacetylase complex, and protein DJ-1 antagonizes this inhibition by abrogation of this complex. Microtubule inner protein (MIP) part of the dynein-decorated doublet microtubules (DMTs) in cilia axoneme, which is required for motile cilia beating. The sequence is that of EF-hand calcium-binding domain-containing protein 6 (Efcab6) from Mus musculus (Mouse).